A 1456-amino-acid polypeptide reads, in one-letter code: DNA polymerase gamma, mitochondrial (1456 aa).

Residues 1-41 (MLTPVRCRTVPNATVATAARVLRRANLFSRYPRQLGHLRWD) constitute a mitochondrion transit peptide. Disordered stretches follow at residues 1200 to 1266 (APEM…SLDD) and 1308 to 1443 (AVTT…SWKP). Over residues 1204-1239 (AAVPSTSSESKSKASATTSTTTTENATASPSSSSNV) the composition is skewed to low complexity. The segment covering 1315–1325 (PEPPTNPPPVA) has biased composition (pro residues). 2 stretches are compositionally biased toward low complexity: residues 1346–1371 (PKNP…TPKP) and 1411–1428 (TASV…ATAT).

This sequence belongs to the DNA polymerase type-A family. The cofactor is Mg(2+).

It is found in the mitochondrion. The enzyme catalyses DNA(n) + a 2'-deoxyribonucleoside 5'-triphosphate = DNA(n+1) + diphosphate. Involved in the replication of mitochondrial DNA. This is DNA polymerase gamma, mitochondrial (mip-1) from Neurospora crassa (strain ATCC 24698 / 74-OR23-1A / CBS 708.71 / DSM 1257 / FGSC 987).